Here is a 698-residue protein sequence, read N- to C-terminus: Elongation factor G (698 aa).

In terms of domain architecture, tr-type G spans 8-290 (ERYRNIGISA…AVIELLPSPV (283 aa)). GTP contacts are provided by residues 17–24 (AHIDAGKT), 88–92 (DTPGH), and 142–145 (NKMD).

It belongs to the TRAFAC class translation factor GTPase superfamily. Classic translation factor GTPase family. EF-G/EF-2 subfamily.

It localises to the cytoplasm. In terms of biological role, catalyzes the GTP-dependent ribosomal translocation step during translation elongation. During this step, the ribosome changes from the pre-translocational (PRE) to the post-translocational (POST) state as the newly formed A-site-bound peptidyl-tRNA and P-site-bound deacylated tRNA move to the P and E sites, respectively. Catalyzes the coordinated movement of the two tRNA molecules, the mRNA and conformational changes in the ribosome. This chain is Elongation factor G, found in Aromatoleum aromaticum (strain DSM 19018 / LMG 30748 / EbN1) (Azoarcus sp. (strain EbN1)).